An 821-amino-acid chain; its full sequence is KN motif and ankyrin repeat domain-containing protein 3 (821 aa).

Positions 1-10 (MAKFALNQNL) are enriched in polar residues. Disordered regions lie at residues 1-36 (MAKFALNQNLPDLGGPRLCPVPAAGGARSPSSPYSV), 58-184 (GPAA…AQLQ), 224-333 (LLAG…APET), and 385-547 (AAEE…GRCE). The segment covering 77–88 (RPGLAGARSPGA) has biased composition (low complexity). Over residues 128–150 (PRVEHTLRETSRRLELAQTHERA) the composition is skewed to basic and acidic residues. Positions 151–181 (PSPGRGVPRSPRGSGRSSPAPNLAPASPGPA) are enriched in low complexity. 6 positions are modified to phosphoserine: Ser-152, Ser-160, Ser-164, Ser-167, Ser-168, and Ser-177. The stretch at 181–230 (AQLQLVREQMAAALRRLRELEDQARTLPELQEQVRALRAEKARLLAGRAQ) forms a coiled coil. A compositionally biased stretch (basic and acidic residues) spans 237 to 261 (AETRPDKLAQLRRLTERLATSERGG). Phosphoserine is present on residues Ser-271, Ser-280, and Ser-293. Positions 367–404 (GVSELLRGRLRELEEAREAAEEAAAGARAQLREATTQT) form a coiled coil. Composition is skewed to low complexity over residues 388–400 (EAAAGARAQLREA) and 494–507 (NGGAEPPGSSSGSG). ANK repeat units lie at residues 622 to 652 (NGNTALHYSVSHGNLAIASLLLDTGACEVNR), 656 to 690 (AGYSALMLAALTSVRQEEEDMAVVQRLFCMGDVNA), 695 to 724 (TGQTALMLAISHGRQDMVATLLACGADVNA), 728 to 758 (DGATALMCASEYGRLDTVRLLLTQPGCDPAI), and 762 to 785 (EGTSALAIALEAEQDEVAALLHAH). Positions 784-821 (AHLSSGQPDTQSESPPGSQTATPGEGECGDNGENPQVQ) are disordered. A compositionally biased stretch (polar residues) spans 787–805 (SSGQPDTQSESPPGSQTAT).

As to expression, strongly expressed in breast, liver, lung, skeletal muscle and kidney.

May be involved in the control of cytoskeleton formation by regulating actin polymerization. The chain is KN motif and ankyrin repeat domain-containing protein 3 from Homo sapiens (Human).